The chain runs to 556 residues: Outer spore wall assembly protein SHE10 (556 aa).

The N-terminal stretch at 1–21 is a signal peptide; sequence MRFLTKFLLFLATVYFGLKYA. The stretch at 135-201 forms a coiled coil; it reads NKNLKRHVER…KQITSDVKKT (67 aa). Basic and acidic residues predominate over residues 190 to 208; sequence EAKQITSDVKKTVESEIKK. 2 disordered regions span residues 190–263 and 534–556; these read EAKQ…EDIT and RKEA…PISA. Low complexity predominate over residues 220-244; sequence IVSTSTIVKTITRTRHSSSSTTSTK. Positions 245-256 are enriched in basic and acidic residues; that stretch reads SAEETSEKNLET. Residues 481 to 547 adopt a coiled-coil conformation; the sequence is KISEFKLLLD…GEVNESSEEE (67 aa).

Belongs to the SHE10 family. Component of the mitochondria-localized RNase mitochondrial RNA-processing (RNase MRP) composed of one single RNA encoded by the NME1 gene and at least 31 proteins. Absent in the nucleus-localized RNase MRP (NuMRP).

The protein localises to the mitochondrion. Functionally, involved in spore wall assembly. May be a component of the mitochondrial RNase MRP (MtMRP), a ribonucleoprotein endoribonuclease involved in the cleaving RNA transcripts to generate primers for DNA replication in mitochondria. The chain is Outer spore wall assembly protein SHE10 from Candida glabrata (strain ATCC 2001 / BCRC 20586 / JCM 3761 / NBRC 0622 / NRRL Y-65 / CBS 138) (Yeast).